The chain runs to 648 residues: Phosphatidylinositol-3,5-bisphosphate 3-phosphatase MTMR14 (648 aa).

Over residues 1–19 the composition is skewed to low complexity; that stretch reads MAGARAAAAASAGSTASSG. Positions 1-27 are disordered; that stretch reads MAGARAAAAASAGSTASSGSPPPQEPG. N6-acetyllysine is present on K193. N225 and N240 each carry an N-linked (GlcNAc...) asparagine glycan. The Phosphocysteine intermediate role is filled by C329. A 1,2-diacyl-sn-glycero-3-phospho-(1D-myo-inositol-3,5-bisphosphate)-binding residues include G332, W333, D334, R335, and R381. The a 1,2-diacyl-sn-glycero-3-phospho-(1D-myo-inositol-3-phosphate) site is built by G332, W333, D334, R335, and R381. The disordered stretch occupies residues 471 to 544; it reads PTQAAWRKSH…PRSVDHPLPG (74 aa). Residues 494-506 show a composition bias toward basic and acidic residues; it reads PSEERLPSHHGLT. S516 carries the phosphoserine modification. Residue N517 is glycosylated (N-linked (GlcNAc...) asparagine). 3 positions are modified to phosphoserine: S528, S578, and S622. R636 bears the Omega-N-methylarginine mark.

This sequence belongs to the protein-tyrosine phosphatase family. Non-receptor class myotubularin subfamily.

It is found in the cytoplasm. The catalysed reaction is a 1,2-diacyl-sn-glycero-3-phospho-(1D-myo-inositol-3,5-bisphosphate) + H2O = a 1,2-diacyl-sn-glycero-3-phospho-(1D-myo-inositol-5-phosphate) + phosphate. It catalyses the reaction a 1,2-diacyl-sn-glycero-3-phospho-(1D-myo-inositol-3-phosphate) + H2O = a 1,2-diacyl-sn-glycero-3-phospho-(1D-myo-inositol) + phosphate. In terms of biological role, lipid phosphatase that specifically dephosphorylates the D-3 position of phosphatidylinositol 3-phosphate and phosphatidylinositol 3,5-bisphosphate, generating phosphatidylinositol and phosphatidylinositol 5-phosphate. This is Phosphatidylinositol-3,5-bisphosphate 3-phosphatase MTMR14 from Mus musculus (Mouse).